The following is a 204-amino-acid chain: Protein GrpE (204 aa).

The tract at residues 1-55 (MSSKNNPESETKAKNKWEKVMEAEEEQEEGRGDGSQEMEPHREGLEFPSREKLEG) is disordered. Composition is skewed to basic and acidic residues over residues 7–22 (PESETKAKNKWEKVME) and 29–55 (EGRGDGSQEMEPHREGLEFPSREKLEG).

The protein belongs to the GrpE family. Homodimer.

It is found in the cytoplasm. Functionally, participates actively in the response to hyperosmotic and heat shock by preventing the aggregation of stress-denatured proteins, in association with DnaK and GrpE. It is the nucleotide exchange factor for DnaK and may function as a thermosensor. Unfolded proteins bind initially to DnaJ; upon interaction with the DnaJ-bound protein, DnaK hydrolyzes its bound ATP, resulting in the formation of a stable complex. GrpE releases ADP from DnaK; ATP binding to DnaK triggers the release of the substrate protein, thus completing the reaction cycle. Several rounds of ATP-dependent interactions between DnaJ, DnaK and GrpE are required for fully efficient folding. The protein is Protein GrpE of Coxiella burnetii (strain RSA 331 / Henzerling II).